We begin with the raw amino-acid sequence, 645 residues long: Zinc finger protein 235 (645 aa).

One can recognise a KRAB domain in the interval 8 to 86; it reads VTFRDVAVVF…TSHDVNKLAR (79 aa). Disordered regions lie at residues 112 to 144 and 255 to 280; these read GAEQPSQAPEDDGCLENLPSNHSSSSDNQEFLS and KKSPVHSTHKDTRHSPSVPIQPSVHP. Positions 129-144 are enriched in polar residues; sequence LPSNHSSSSDNQEFLS. C2H2-type zinc fingers lie at residues 285-307, 313-335, 341-363, 369-391, 397-419, 425-447, 453-475, 481-503, 509-531, 537-559, 565-587, 593-615, and 621-643; these read YWCHECGKGFRQSSALQTHQRVH, YRCDSCGKGFSRSSDLNIHRRVH, YKCEVCGKGFTQWAHLQAHERIH, YKCGDCGKRFSCSSNLHTHQRVH, YECNECGKRFSLSGNLDIHQRVH, YKCEECGKGFSSASSFQSHQRVH, FHCSVCGKNFSRSSHFLDHQRIH, YRCEVCGKRFPWSLSLHSHQSVH, YKCGECGKGFSHASSLQAHHSVH, FKCNVCQKQFSKTSNLQAHQRVH, YKCDTCGKAFSQKSSLQVHQRIH, FKCEECGKEFRWSVGLSSHQRVH, and YTCQQCGKGFSQASYFHMHQRVH.

It belongs to the krueppel C2H2-type zinc-finger protein family.

It is found in the nucleus. In terms of biological role, may be involved in transcriptional regulation. In Mus musculus (Mouse), this protein is Zinc finger protein 235 (Znf235).